Here is a 637-residue protein sequence, read N- to C-terminus: Threonine--tRNA ligase (637 aa).

Residues Met1–Thr61 form the TGS domain. Positions Asp238–Pro528 are catalytic. Cys329, His380, and His505 together coordinate Zn(2+).

Belongs to the class-II aminoacyl-tRNA synthetase family. In terms of assembly, homodimer. Zn(2+) serves as cofactor.

The protein resides in the cytoplasm. It carries out the reaction tRNA(Thr) + L-threonine + ATP = L-threonyl-tRNA(Thr) + AMP + diphosphate + H(+). Catalyzes the attachment of threonine to tRNA(Thr) in a two-step reaction: L-threonine is first activated by ATP to form Thr-AMP and then transferred to the acceptor end of tRNA(Thr). Also edits incorrectly charged L-seryl-tRNA(Thr). This Desulfosudis oleivorans (strain DSM 6200 / JCM 39069 / Hxd3) (Desulfococcus oleovorans) protein is Threonine--tRNA ligase.